The sequence spans 139 residues: Phosphoribosyl-AMP cyclohydrolase (139 aa).

Asp92 is a Mg(2+) binding site. Zn(2+) is bound at residue Cys93. 2 residues coordinate Mg(2+): Asp94 and Asp96. Zn(2+) contacts are provided by Cys111 and Cys118.

The protein belongs to the PRA-CH family. As to quaternary structure, homodimer. It depends on Mg(2+) as a cofactor. Zn(2+) serves as cofactor.

It is found in the cytoplasm. It carries out the reaction 1-(5-phospho-beta-D-ribosyl)-5'-AMP + H2O = 1-(5-phospho-beta-D-ribosyl)-5-[(5-phospho-beta-D-ribosylamino)methylideneamino]imidazole-4-carboxamide. It functions in the pathway amino-acid biosynthesis; L-histidine biosynthesis; L-histidine from 5-phospho-alpha-D-ribose 1-diphosphate: step 3/9. Its function is as follows. Catalyzes the hydrolysis of the adenine ring of phosphoribosyl-AMP. The chain is Phosphoribosyl-AMP cyclohydrolase from Caulobacter vibrioides (strain ATCC 19089 / CIP 103742 / CB 15) (Caulobacter crescentus).